Reading from the N-terminus, the 141-residue chain is Galactose-6-phosphate isomerase subunit LacA 1 (141 aa).

This sequence belongs to the LacAB/RpiB family. In terms of assembly, heteromultimeric protein consisting of LacA and LacB.

The catalysed reaction is aldehydo-D-galactose 6-phosphate = keto-D-tagatose 6-phosphate. It participates in carbohydrate metabolism; D-galactose 6-phosphate degradation; D-tagatose 6-phosphate from D-galactose 6-phosphate: step 1/1. This chain is Galactose-6-phosphate isomerase subunit LacA 1, found in Streptococcus pyogenes serotype M1.